Reading from the N-terminus, the 318-residue chain is Vomeronasal type-1 receptor A11 (318 aa).

Over 1–32 the chain is Extracellular; the sequence is MSEILFFSPQPLFSHMMNKNSRLHTHSNIKNT. Residues 33-53 traverse the membrane as a helical segment; it reads FFSEIGIGISGNSFLLLFHIL. The Cytoplasmic portion of the chain corresponds to 54-65; that stretch reads KFIRGHRPRLTD. A helical membrane pass occupies residues 66 to 86; that stretch reads LPIGLLSLIHLLMLLLMAFIA. Residues 87 to 101 are Extracellular-facing; it reads TDIFISRRGWDGIIC. Cysteines 101 and 188 form a disulfide. The helical transmembrane segment at 102–118 threads the bilayer; the sequence is KFLVYLYGVLRGLSLCT. The Cytoplasmic segment spans residues 119–147; it reads TSMLSVLQAIILSPRSSCLAKLKHKSPHH. Residues 148-168 form a helical membrane-spanning segment; sequence ISCAIIFLSVLYMLISSHILL. The Extracellular portion of the chain corresponds to 169-206; the sequence is SITATPNLTMNDFLYVSQSCSLLPLSYLVQSMYSTLLA. The N-linked (GlcNAc...) asparagine glycan is linked to N175. Residues 207 to 227 form a helical membrane-spanning segment; the sequence is LREVFLISLMVLSTLYMVVLL. The Cytoplasmic segment spans residues 228-254; the sequence is CRHRKQAQHLQGTSLSPKASAEQRATQ. Residues 255–275 form a helical membrane-spanning segment; the sequence is TILMLMTFFVLMSIFDSIVSC. Over 276–285 the chain is Extracellular; the sequence is SRTMFLDDPT. Residues 286-306 traverse the membrane as a helical segment; it reads SYSIHIFVMHIYATVSPFVFM. The Cytoplasmic segment spans residues 307 to 318; sequence STEKHIVNILRG.

Belongs to the G-protein coupled receptor 1 family.

Its subcellular location is the cell membrane. Its function is as follows. Putative pheromone receptor implicated in the regulation of social and reproductive behavior. The polypeptide is Vomeronasal type-1 receptor A11 (Mus musculus (Mouse)).